An 82-amino-acid polypeptide reads, in one-letter code: Modifier of protein aggregation 4 (82 aa).

The span at 1 to 23 shows a compositional bias: basic and acidic residues; that stretch reads MTRGNQRDLAREKNQKKLADQKK. Disordered stretches follow at residues 1–41 and 63–82; these read MTRG…MDAR and EAAA…PLKM.

This sequence belongs to the SERF family.

The protein resides in the cytoplasm. It localises to the cytosol. The protein localises to the nucleus. In terms of biological role, positive regulator of protein aggregation and age-related proteotoxicity. Induces conformational changes in aggregation-prone proteins, driving them into compact formations preceding the formation of aggregates. The chain is Modifier of protein aggregation 4 from Caenorhabditis elegans.